A 58-amino-acid chain; its full sequence is Sperm protamine P2 (58 aa).

Residues 1–58 are disordered; that stretch reads RRRRRRGKGRGKKRKGKGKKRGKGRRRGSKGRKKKKGKGKKRKRRRRRRRKGSKGKGK.

As to expression, gonads.

Its subcellular location is the nucleus. It localises to the chromosome. Its function is as follows. Protamines substitute for histones in the chromatin of sperm during the haploid phase of spermatogenesis. They compact sperm DNA into a highly condensed, stable and inactive complex. The sequence is that of Sperm protamine P2 from Bolinus brandaris (Purple dye murex).